Reading from the N-terminus, the 201-residue chain is Small ribosomal subunit protein uS4 (201 aa).

The S4 RNA-binding domain maps to 91-155; the sequence is SRLDNVVYRA…STLPFQVARE (65 aa).

The protein belongs to the universal ribosomal protein uS4 family. Part of the 30S ribosomal subunit. Contacts protein S5. The interaction surface between S4 and S5 is involved in control of translational fidelity.

In terms of biological role, one of the primary rRNA binding proteins, it binds directly to 16S rRNA where it nucleates assembly of the body of the 30S subunit. Its function is as follows. With S5 and S12 plays an important role in translational accuracy. This is Small ribosomal subunit protein uS4 from Rhodococcus jostii (strain RHA1).